The following is a 649-amino-acid chain: ATP-dependent DNA helicase Q1 (649 aa).

One can recognise a Helicase ATP-binding domain in the interval Ile100–Phe275. Met113–Gly120 contributes to the ATP binding site. A DEVH box motif is present at residues Asp219–His222. One can recognise a Helicase C-terminal domain in the interval Phe300–Ser451. Zn(2+) contacts are provided by Cys453, Cys471, Cys475, and Cys478. An N6-acetyllysine mark is found at Lys514 and Lys522. A phosphoserine mark is found at Ser597 and Ser602. Positions Ser597–Ser608 are enriched in polar residues. Residues Ser597 to Ala649 form a disordered region. Residues Glu609–Asn619 show a composition bias toward basic and acidic residues. Positions Met630–Thr639 are enriched in polar residues. Position 634 is a phosphoserine (Ser634). Positions Gly640–Ala649 are enriched in basic residues.

This sequence belongs to the helicase family. RecQ subfamily. May form homodimers or higher order oligomers. Interacts with EXO1. Interacts with MLH1. Interacts with PARP1. Requires Mg(2+) as cofactor. Mn(2+) serves as cofactor. The cofactor is Zn(2+).

The protein resides in the nucleus. The catalysed reaction is Couples ATP hydrolysis with the unwinding of duplex DNA by translocating in the 3'-5' direction.. The enzyme catalyses ATP + H2O = ADP + phosphate + H(+). It catalyses the reaction dATP + H2O = dADP + phosphate + H(+). Its function is as follows. DNA helicase that plays a role in DNA damage repair and genome stability. Exhibits a magnesium- and ATP-dependent DNA-helicase activity that unwinds single- and double-stranded DNA in a 3'-5' direction. Plays a role in restoring regressed replication forks. Required to restart stalled replication forks induced by abortive topoisomerase 1 and 2 lesions. May play a role in the repair of DNA that is damaged by ultraviolet light or other mutagens. In Pongo abelii (Sumatran orangutan), this protein is ATP-dependent DNA helicase Q1 (RECQL).